We begin with the raw amino-acid sequence, 467 residues long: Coiled-coil domain-containing protein 174 (467 aa).

Disordered stretches follow at residues 47–76 (INKK…LEEQ) and 129–163 (GATR…SEEW). A compositionally biased stretch (basic and acidic residues) spans 64–76 (RAEKDAEQKLEEQ). Residues 64–99 (RAEKDAEQKLEEQKTLDKAREKLEEKAKLYEKMTKG) are a coiled coil. The span at 136 to 147 (IEEERDDDDKEE) shows a compositional bias: acidic residues. Ser198 bears the Phosphoserine mark. The stretch at 268–310 (LEMLREQTTDQRIKRENIKEKRKAMLEARLAKLRQKKMKKSKE) forms a coiled coil. 2 disordered regions span residues 301–365 (RQKK…IREW) and 379–454 (KQSE…VTFQ). Basic and acidic residues-rich tracts occupy residues 349–365 (IQER…IREW) and 379–390 (KQSELRAERDPE). Residues 406–415 (PMSSQPQSRP) show a composition bias toward polar residues. Residues 423 to 446 (GHSSGQSQEPSSSHTSTPASESSP) are compositionally biased toward low complexity.

The protein resides in the nucleus. Functionally, probably involved in neuronal development. This is Coiled-coil domain-containing protein 174 (Ccdc174) from Mus musculus (Mouse).